The primary structure comprises 384 residues: Acetylgalactosaminyl-O-glycosyl-glycoprotein beta-1,3-N-acetylglucosaminyltransferase (384 aa).

The Cytoplasmic portion of the chain corresponds to 1–12; the sequence is MAFPCRRSLTAK. Residues 13–31 traverse the membrane as a helical; Signal-anchor for type II membrane protein segment; it reads TLACLLVGVSFLALQQWFL. The Lumenal segment spans residues 32-384; that stretch reads QAPRSPREER…LSCDRGHRVS (353 aa). Residues 34–68 form a disordered region; the sequence is PRSPREERSPQEETPEGPTDAPAADEPPSELVPGP. N-linked (GlcNAc...) asparagine glycans are attached at residues Asn-73, Asn-77, and Asn-196.

It belongs to the glycosyltransferase 31 family. In terms of tissue distribution, present in stomach and colon (at protein level). Restricted in the stomach, colon and small intestine, where core 3 structure is present.

It localises to the golgi apparatus membrane. The enzyme catalyses a 3-O-[N-acetyl-alpha-D-galactosaminyl]-L-threonyl-[protein] + UDP-N-acetyl-alpha-D-glucosamine = a 3-O-[N-acetyl-beta-D-glucosaminyl-(1-&gt;3)-N-acetyl-alpha-D-galactosaminyl]-L-threonyl-[protein] + UDP + H(+). It catalyses the reaction a 3-O-[N-acetyl-alpha-D-galactosaminyl]-L-seryl-[protein] + UDP-N-acetyl-alpha-D-glucosamine = 3-O-[N-acetyl-beta-D-glucosaminyl-(1-&gt;3)-N-acetyl-alpha-D-galactosaminyl]-L-seryl-[protein] + UDP + H(+). The protein operates within protein modification; protein glycosylation. Functionally, beta-1,3-N-acetylglucosaminyltransferase that synthesizes the core 3 structure of the O-glycan, an important precursor in the biosynthesis of mucin-type glycoproteins. Plays an important role in the synthesis of mucin-type O-glycans in digestive organs. This Homo sapiens (Human) protein is Acetylgalactosaminyl-O-glycosyl-glycoprotein beta-1,3-N-acetylglucosaminyltransferase (B3GNT6).